The sequence spans 157 residues: Probable succinate transporter subunit YjjB (157 aa).

4 helical membrane-spanning segments follow: residues 6 to 26 (IILT…GFAM), 51 to 71 (VLMI…ILVG), 87 to 107 (VFTV…VAMI), and 129 to 149 (FLKA…PGLW).

It belongs to the ThrE exporter (TC 2.A.79) family. In terms of assembly, the transporter is composed of YjjB and YjjP.

It is found in the cell inner membrane. Its function is as follows. Involved in succinate export with YjjP. Both proteins are required for export. This Proteus mirabilis (strain HI4320) protein is Probable succinate transporter subunit YjjB.